Here is a 373-residue protein sequence, read N- to C-terminus: Dual-specificity RNA methyltransferase RlmN (373 aa).

The active-site Proton acceptor is the Glu94. The Radical SAM core domain maps to 100–339; the sequence is EDDRATLCVS…VIVRKTRGDD (240 aa). Residues Cys107 and Cys344 are joined by a disulfide bond. Residues Cys114, Cys118, and Cys121 each coordinate [4Fe-4S] cluster. S-adenosyl-L-methionine-binding positions include 168 to 169, Ser200, 222 to 224, and Asn301; these read GE and SIH. Cys344 serves as the catalytic S-methylcysteine intermediate.

The protein belongs to the radical SAM superfamily. RlmN family. [4Fe-4S] cluster serves as cofactor.

The protein resides in the cytoplasm. The catalysed reaction is adenosine(2503) in 23S rRNA + 2 reduced [2Fe-2S]-[ferredoxin] + 2 S-adenosyl-L-methionine = 2-methyladenosine(2503) in 23S rRNA + 5'-deoxyadenosine + L-methionine + 2 oxidized [2Fe-2S]-[ferredoxin] + S-adenosyl-L-homocysteine. It catalyses the reaction adenosine(37) in tRNA + 2 reduced [2Fe-2S]-[ferredoxin] + 2 S-adenosyl-L-methionine = 2-methyladenosine(37) in tRNA + 5'-deoxyadenosine + L-methionine + 2 oxidized [2Fe-2S]-[ferredoxin] + S-adenosyl-L-homocysteine. Its function is as follows. Specifically methylates position 2 of adenine 2503 in 23S rRNA and position 2 of adenine 37 in tRNAs. m2A2503 modification seems to play a crucial role in the proofreading step occurring at the peptidyl transferase center and thus would serve to optimize ribosomal fidelity. This is Dual-specificity RNA methyltransferase RlmN from Shewanella amazonensis (strain ATCC BAA-1098 / SB2B).